Here is a 113-residue protein sequence, read N- to C-terminus: Neocarzinostatin (113 aa).

Cystine bridges form between Cys37–Cys47 and Cys88–Cys93.

It belongs to the neocarzinostatin family.

In terms of biological role, NCS has antibiotic activity (for Gram-positive bacteria) and antitumor activity (for certain mouse tumors). NCS binds non-covalently to a chromophore which is the cytotoxic and mutagenic component of the antibiotic. The chromophore binds to DNA as a weak intercalator and causes single- and double-strand breaks. The polypeptide is Neocarzinostatin (ncsA) (Streptomyces malayensis).